We begin with the raw amino-acid sequence, 292 residues long: E3 ubiquitin-protein ligase RNF144A (292 aa).

A TRIAD supradomain region spans residues 16-236 (PLVSCKLCLG…YDKGPCRNKL (221 aa)). The Zn(2+) site is built by Cys-20, Cys-23, Cys-43, Cys-46, Cys-111, Cys-116, Cys-135, Cys-138, Cys-143, Cys-146, His-151, Cys-156, Cys-185, and Cys-188. The RING-type 1 zinc finger occupies 20–70 (CKLCLGEYPVEQMTTIAQCQCIFCTLCLKQYVELLIKEGLETAISCPDAAC). The segment at 91 to 156 (QRYKKLQFER…KASWHPGQGC (66 aa)) adopts an IBR-type zinc-finger fold. Residues 185 to 214 (CPKCKVYIERDEGCAQMMCKNCKHAFCWYC) form an RING-type 2; atypical zinc finger. Cys-198 is an active-site residue. Zn(2+) contacts are provided by Cys-203, Cys-206, Cys-211, Cys-214, His-226, and Cys-232. The chain crosses the membrane as a helical span at residues 250-270 (VVGIFAGFGLLLLVASPFLLL).

The protein belongs to the RBR family. RNF144 subfamily. As to quaternary structure, self-associates. Interacts with UBE2L3. Post-translationally, auto-ubiquitinated.

The protein resides in the cell membrane. Its subcellular location is the cytoplasmic vesicle membrane. It localises to the endosome membrane. The protein localises to the endoplasmic reticulum membrane. The catalysed reaction is [E2 ubiquitin-conjugating enzyme]-S-ubiquitinyl-L-cysteine + [acceptor protein]-L-lysine = [E2 ubiquitin-conjugating enzyme]-L-cysteine + [acceptor protein]-N(6)-ubiquitinyl-L-lysine.. It participates in protein modification; protein ubiquitination. E3 ubiquitin-protein ligase which accepts ubiquitin from E2 ubiquitin-conjugating enzymes UBE2L3 and UBE2L6 in the form of a thioester and then directly transfers the ubiquitin to targeted substrates. Mediates the ubiquitination and degradation of the DNA damage kinase PRKDC during DNA damage. Positively regulates DNA virus or exogenous cytosolic DNA-triggered innate immune response by mediating STING1 ubiquitination and increasing its 'Lys-6'-linked ubiquitination and translocation from the endoplasmic reticulum to the Golgi leading to downstream signaling pathways. Plays a positive role in EGF-dependent cell proliferation by prolonging EGF/EGFR signaling during EGF stimulation through EGFR ubiquitination. Increases ERK activity independently of EGFR signaling by promoting polyubiquitination and subsequent degradation of VRK3 in the cytosol. The chain is E3 ubiquitin-protein ligase RNF144A (RNF144A) from Homo sapiens (Human).